The sequence spans 345 residues: Serpentine receptor class beta-5 (345 aa).

The Extracellular portion of the chain corresponds to 1–22; the sequence is MAEINQTKCDLAFQISYHPIYR. Residue Asn-5 is glycosylated (N-linked (GlcNAc...) asparagine). Residues 23-43 traverse the membrane as a helical segment; that stretch reads LAQFWTLSVSLLAVPSLLYFL. The Cytoplasmic segment spans residues 44–57; that stretch reads LKRVLLLPFHGNLK. The helical transmembrane segment at 58-78 threads the bilayer; that stretch reads CLLITYFSSIFLYALVLCFDF. At 79–103 the chain is on the extracellular side; sequence SYQCLIPFIVTTKCSLIIDQTLYKC. A helical membrane pass occupies residues 104–124; the sequence is GHMTSLFFLTTPMLLPFGFSI. Residues 125 to 142 are Cytoplasmic-facing; sequence ERFVAVGMAYKYEKMRTL. A helical transmembrane segment spans residues 143-163; that stretch reads LGPILCFILVAPNFVVFYFLF. The Extracellular portion of the chain corresponds to 164–189; that stretch reads RDEQFTDSFISFLVLPNTPAVQFNNY. A helical transmembrane segment spans residues 190 to 210; sequence LWFLLYAKIGNFCCNCVLLIF. The Cytoplasmic portion of the chain corresponds to 211 to 241; that stretch reads HKRFKNTYLKKKTSLSVRYALEEISNSSKFT. A helical transmembrane segment spans residues 242–262; that stretch reads LILTFTHLVFFGAYTIGSILV. The Extracellular segment spans residues 263-280; sequence RTLGESFFGNFLNFYVAR. Residues 281–301 form a helical membrane-spanning segment; the sequence is GVNCAVPTYNLLIAFVGLISL. The Cytoplasmic segment spans residues 302-345; sequence RQLNSRRHAKILTKVLIRVTGQEGARNYDDIIMQQWNTVSNRTR.

It belongs to the nematode receptor-like protein srb family. Expressed throughout the head.

It is found in the cell membrane. It localises to the perikaryon. Its subcellular location is the cell projection. The protein resides in the dendrite. Its function is as follows. G-protein coupled receptor. Plays a role in the navigational capacity of sperm and promotes the targeting of sperm derived from males to the fertilization site in the uterus of hermaphrodites. In Caenorhabditis elegans, this protein is Serpentine receptor class beta-5.